The following is a 568-amino-acid chain: Glucose-6-phosphate isomerase, cytosolic 1 (568 aa).

The active-site Proton donor is the glutamate 360. Catalysis depends on residues histidine 391 and lysine 516.

This sequence belongs to the GPI family. Homodimer.

The protein localises to the cytoplasm. The catalysed reaction is alpha-D-glucose 6-phosphate = beta-D-fructose 6-phosphate. It participates in carbohydrate degradation; glycolysis; D-glyceraldehyde 3-phosphate and glycerone phosphate from D-glucose: step 2/4. The sequence is that of Glucose-6-phosphate isomerase, cytosolic 1 (PGIC1) from Clarkia mildrediae.